Here is a 487-residue protein sequence, read N- to C-terminus: Malonate-semialdehyde dehydrogenase 2 (487 aa).

Residues F154, K178, E181, R182, and S231 each coordinate NAD(+). Catalysis depends on C286, which acts as the Nucleophile. NAD(+) is bound at residue E386.

Belongs to the aldehyde dehydrogenase family. IolA subfamily. As to quaternary structure, homotetramer.

It carries out the reaction 3-oxopropanoate + NAD(+) + CoA + H2O = hydrogencarbonate + acetyl-CoA + NADH + H(+). The enzyme catalyses 2-methyl-3-oxopropanoate + NAD(+) + CoA + H2O = propanoyl-CoA + hydrogencarbonate + NADH + H(+). It functions in the pathway polyol metabolism; myo-inositol degradation into acetyl-CoA; acetyl-CoA from myo-inositol: step 7/7. Its function is as follows. Catalyzes the oxidation of malonate semialdehyde (MSA) and methylmalonate semialdehyde (MMSA) into acetyl-CoA and propanoyl-CoA, respectively. Is involved in a myo-inositol catabolic pathway. Bicarbonate, and not CO2, is the end-product of the enzymatic reaction. The polypeptide is Malonate-semialdehyde dehydrogenase 2 (Bacillus thuringiensis subsp. konkukian (strain 97-27)).